A 193-amino-acid polypeptide reads, in one-letter code: Major structural subunit of bundle-forming pilus (193 aa).

A propeptide spans 1–13 (MVSKIMNKKYEKG) (leader sequence). Leu-14 bears the N-methylleucine mark. The chain crosses the membrane as a helical span at residues 14–35 (LSLIESAMVLALAATVTAGVMF). Cys-129 and Cys-179 are joined by a disulfide.

The protein belongs to the N-Me-Phe pilin family. 10 to 100 laterally aligned filaments or bundle-forming pili coalesce into rope-like bundles. These form linkages between the bacteria within the enteropathogenic E.coli (EPEC) microcolonies that are attached to epithelial cells.

The protein localises to the fimbrium. It localises to the membrane. Major component of type IV bundle-forming pili (BFP) that plays a role in adherence to host cells and virulence. The polypeptide is Major structural subunit of bundle-forming pilus (bfpA) (Escherichia coli O127:H6 (strain E2348/69 / EPEC)).